A 676-amino-acid chain; its full sequence is MIRYSGFSVVRSCLSRTFSRNNSALSTAITSSLLTNLFPTCKSCGVRLQSSDPKGPGYYILEESKPAKRFVKSEDQVFAKYVNDLSLEDKKLLINEDSKKVSDSESRSESQDLSNEADIDSSLVNSLGNKDYYASEIKKVSQKDKFKLEEKYNDSVECVRCRDATYRSNFKNFSQQEYPLELLDNIMSRIPPHEQIVYIVNAQDFPMSINPKIFQYRSSNELKFIVNKADLLFKSINLSKNYGQTFFSDYLFHKYRVPKENVMVVSGTNYWDFDKVLDFVDDNSYLIGNVNCGKSTIIKGMLYTIDKSNKRKKFMSSRERTKMEKEQDMLINRASRMKAMTAGEKKKEKKRYEMLFRSKVGPGVSHIPGFTRGFIQIDLEDMDKTIYDVPGFVNSENQLIHHHDIYNKISSPKILKQIHKGVKVYDKGTYTSKYITAKGGQSLTIGGLFFLNFPQKSMYQLRNCINHDFHLFSNFSRAVYISSNLSKYPGMGSKFFIEHDDSSLKELRRFIIPPFHGSIDLVIQNLGHINIKPTGRKETNQPLILYLPPGVEAIIRLPITNYIAKTFTGRDAKGNPLRKENILTKGVLALQRYTAKYPFYSTLISANKGAEVSSELALILKSEATCEPVTDAEQERLVKQDFARIGEWATIARGVECNYNERTVVDERNKFDYWME.

Residues 1 to 48 constitute a mitochondrion transit peptide; that stretch reads MIRYSGFSVVRSCLSRTFSRNNSALSTAITSSLLTNLFPTCKSCGVRL. Residues 98–110 are compositionally biased toward basic and acidic residues; that stretch reads SKKVSDSESRSES. Positions 98–117 are disordered; sequence SKKVSDSESRSESQDLSNEA. In terms of domain architecture, CP-type G spans 180-395; it reads LELLDNIMSR…IYDVPGFVNS (216 aa).

Belongs to the TRAFAC class YlqF/YawG GTPase family. GEP3 subfamily.

Its subcellular location is the mitochondrion. In terms of biological role, may be involved in the mitochondrial lipid metabolism. The protein is Genetic interactor of prohibitins 3, mitochondrial (GEP3) of Scheffersomyces stipitis (strain ATCC 58785 / CBS 6054 / NBRC 10063 / NRRL Y-11545) (Yeast).